The chain runs to 188 residues: Shikimate kinase (188 aa).

21–26 (GAGKTT) provides a ligand contact to ATP. A Mg(2+)-binding site is contributed by threonine 25. 3 residues coordinate substrate: aspartate 43, arginine 67, and glycine 90. Arginine 130 is a binding site for ATP. Arginine 148 is a substrate binding site.

This sequence belongs to the shikimate kinase family. As to quaternary structure, monomer. The cofactor is Mg(2+).

The protein resides in the cytoplasm. The enzyme catalyses shikimate + ATP = 3-phosphoshikimate + ADP + H(+). The protein operates within metabolic intermediate biosynthesis; chorismate biosynthesis; chorismate from D-erythrose 4-phosphate and phosphoenolpyruvate: step 5/7. Catalyzes the specific phosphorylation of the 3-hydroxyl group of shikimic acid using ATP as a cosubstrate. The chain is Shikimate kinase from Geobacillus kaustophilus (strain HTA426).